The sequence spans 285 residues: Polyamine aminopropyltransferase (285 aa).

Residues 5–241 (DTWFTEHFQT…GWWSVTLSSK (237 aa)) form the PABS domain. Q35 lines the S-methyl-5'-thioadenosine pocket. H66 and D90 together coordinate spermidine. S-methyl-5'-thioadenosine is bound by residues D110 and 141-142 (DG). D160 (proton acceptor) is an active-site residue. 160 to 163 (DSTD) contacts spermidine. P167 provides a ligand contact to S-methyl-5'-thioadenosine.

Belongs to the spermidine/spermine synthase family. As to quaternary structure, homodimer or homotetramer.

Its subcellular location is the cytoplasm. It catalyses the reaction S-adenosyl 3-(methylsulfanyl)propylamine + putrescine = S-methyl-5'-thioadenosine + spermidine + H(+). It participates in amine and polyamine biosynthesis; spermidine biosynthesis; spermidine from putrescine: step 1/1. Catalyzes the irreversible transfer of a propylamine group from the amino donor S-adenosylmethioninamine (decarboxy-AdoMet) to putrescine (1,4-diaminobutane) to yield spermidine. This Xylella fastidiosa (strain Temecula1 / ATCC 700964) protein is Polyamine aminopropyltransferase.